We begin with the raw amino-acid sequence, 338 residues long: tRNA N6-adenosine threonylcarbamoyltransferase (338 aa).

Residues His111 and His115 each coordinate Fe cation. Substrate-binding positions include 134-138 (LVSGG), Asp167, Gly180, and Asn272. Position 300 (Asp300) interacts with Fe cation.

The protein belongs to the KAE1 / TsaD family. Fe(2+) is required as a cofactor.

Its subcellular location is the cytoplasm. It carries out the reaction L-threonylcarbamoyladenylate + adenosine(37) in tRNA = N(6)-L-threonylcarbamoyladenosine(37) in tRNA + AMP + H(+). Required for the formation of a threonylcarbamoyl group on adenosine at position 37 (t(6)A37) in tRNAs that read codons beginning with adenine. Is involved in the transfer of the threonylcarbamoyl moiety of threonylcarbamoyl-AMP (TC-AMP) to the N6 group of A37, together with TsaE and TsaB. TsaD likely plays a direct catalytic role in this reaction. This chain is tRNA N6-adenosine threonylcarbamoyltransferase, found in Shewanella halifaxensis (strain HAW-EB4).